A 256-amino-acid chain; its full sequence is Probable histidine-binding protein (256 aa).

Residues 1–19 (MKKFLTAFLVAFTGLFLVA) form the signal peptide. C20 carries N-palmitoyl cysteine lipidation. Residue C20 is the site of S-diacylglycerol cysteine attachment.

It belongs to the bacterial solute-binding protein 3 family.

The protein localises to the cell membrane. Involved in histidine transport. The chain is Probable histidine-binding protein (hisJ) from Campylobacter jejuni subsp. jejuni serotype O:2 (strain ATCC 700819 / NCTC 11168).